A 906-amino-acid polypeptide reads, in one-letter code: Centromere protein C (906 aa).

Polar residues-rich tracts occupy residues 56 to 74 (SLTSSTQKKKANYSQSSSK) and 87 to 96 (SSRTGEASLQ). 2 disordered regions span residues 56 to 115 (SLTS…NEVH) and 141 to 169 (QKAASPAGQKRVASVSRSPVDRQASNKNI). 2 positions are modified to phosphoserine: S71 and S94. Positions 97 to 108 (ASAEPSEAAGGS) are enriched in low complexity. Glycyl lysine isopeptide (Lys-Gly) (interchain with G-Cter in SUMO2) cross-links involve residues K150 and K182. Positions 197–224 (VEDNLSKGQEGTSSEITQKRDDLSSDVQ) are disordered. Residues 202–212 (SKGQEGTSSEI) are compositionally biased toward polar residues. A Nuclear localization signal motif is present at residues 228–242 (KKNFSELFLETVKRK). Residues K229, K240, K242, and K266 each participate in a glycyl lysine isopeptide (Lys-Gly) (interchain with G-Cter in SUMO2) cross-link. 3 disordered regions span residues 294-320 (RHLSAHKPSPENTALLQGKKSREKSHS), 341-596 (AQLS…SLAI), and 623-671 (EYTS…EQDQ). A phosphoserine mark is found at S302, S344, S363, and S404. Residues 402 to 424 (GQSSWENSNVSNTGQDKLQINSK) are compositionally biased toward polar residues. Over residues 426–450 (NMKDCEEVRNEPNPKKQKPALENKK) the composition is skewed to basic and acidic residues. The Nuclear localization signal motif lies at 449-466 (KKKTNSTQTNKEKSGKKF). Over residues 465 to 474 (KFFSGGSKNK) the composition is skewed to low complexity. Over residues 481 to 494 (TLTSRRSCRISQRP) the composition is skewed to polar residues. Position 495 is a phosphoserine (S495). Basic and acidic residues predominate over residues 496–512 (EWWRVKSDESSVDRNPS). K501 is covalently cross-linked (Glycyl lysine isopeptide (Lys-Gly) (interchain with G-Cter in SUMO2)). At S505 the chain carries Phosphoserine. A compositionally biased stretch (basic residues) spans 523-546 (NKKKQTKRNHVSKRAGKKPGSSKR). The Nuclear localization signal signature appears at 525–540 (KKQTKRNHVSKRAGKK). The span at 626-637 (SKTQMESASNSE) shows a compositional bias: polar residues. K640 is covalently cross-linked (Glycyl lysine isopeptide (Lys-Gly) (interchain with G-Cter in SUMO2)). S647 and S673 each carry phosphoserine. K692 participates in a covalent cross-link: Glycyl lysine isopeptide (Lys-Gly) (interchain with G-Cter in SUMO2). Residues 702-724 (VRRSNRIRLKPLEYWRGERVDYQ) form an MIF2 homology domain II region. Phosphoserine occurs at positions 728 and 737. Positions 744-762 (KIKAQRNLGKVNKKVTKKP) match the Nuclear localization signal motif. A Glycyl lysine isopeptide (Lys-Gly) (interchain with G-Cter in SUMO2) cross-link involves residue K770. Residues 853 to 906 (LVFYVNFGDLLCTLHETPYKLTTGDSFYVPSGNHYNIKNLLNVESSLLFTQIKR) are MIF2 homology domain III.

The protein belongs to the CENP-C/MIF2 family. Oligomer. Component of the CENPA-NAC complex, at least composed of CENPA, CENPC, CENPH, CENPM, CENPN, CENPT and CENPU. The CENPA-NAC complex interacts with the CENPA-CAD complex, composed of CENPI, CENPK, CENPL, CENPO, CENPP, CENPQ, CENPR and CENPS. Binds to DAXX. Interacts with DNMT3B. Interacts directly with CENPA. Identified in a centromere complex containing histones H2A, H2B and H4, and at least CENPA, CENPB, CENPC, CENPT, CENPN, HJURP, SUPT16H, SSRP1 and RSF1. Interacts with MEIKIN.

The protein resides in the nucleus. Its subcellular location is the chromosome. It localises to the centromere. The protein localises to the kinetochore. Functionally, component of the CENPA-NAC (nucleosome-associated) complex, a complex that plays a central role in assembly of kinetochore proteins, mitotic progression and chromosome segregation. The CENPA-NAC complex recruits the CENPA-CAD (nucleosome distal) complex and may be involved in incorporation of newly synthesized CENPA into centromeres. CENPC recruits DNA methylation and DNMT3B to both centromeric and pericentromeric satellite repeats and regulates the histone code in these regions. This chain is Centromere protein C (Cenpc), found in Mus musculus (Mouse).